The primary structure comprises 318 residues: Phosphatidylglycerol--prolipoprotein diacylglyceryl transferase (318 aa).

3 consecutive transmembrane segments (helical) span residues 24–44 (GPST…YLLP), 60–80 (LLLL…VFEI), and 115–135 (LFSG…LFIT). Residue arginine 164 coordinates a 1,2-diacyl-sn-glycero-3-phospho-(1'-sn-glycerol). The next 2 membrane-spanning stretches (helical) occupy residues 198–218 (VPVW…FFYF) and 285–305 (GFSQ…FFIL).

This sequence belongs to the Lgt family.

It is found in the cell inner membrane. It carries out the reaction L-cysteinyl-[prolipoprotein] + a 1,2-diacyl-sn-glycero-3-phospho-(1'-sn-glycerol) = an S-1,2-diacyl-sn-glyceryl-L-cysteinyl-[prolipoprotein] + sn-glycerol 1-phosphate + H(+). Its pathway is protein modification; lipoprotein biosynthesis (diacylglyceryl transfer). In terms of biological role, catalyzes the transfer of the diacylglyceryl group from phosphatidylglycerol to the sulfhydryl group of the N-terminal cysteine of a prolipoprotein, the first step in the formation of mature lipoproteins. The sequence is that of Phosphatidylglycerol--prolipoprotein diacylglyceryl transferase from Leptospira interrogans serogroup Icterohaemorrhagiae serovar copenhageni (strain Fiocruz L1-130).